Here is a 607-residue protein sequence, read N- to C-terminus: Elongation factor 4 (607 aa).

In terms of domain architecture, tr-type G spans 11 to 193; sequence EKIRNFSIIA…QIVEKVPAPT (183 aa). Residues 23–28 and 140–143 contribute to the GTP site; these read DHGKST and NKID.

The protein belongs to the TRAFAC class translation factor GTPase superfamily. Classic translation factor GTPase family. LepA subfamily.

The protein resides in the cell membrane. The enzyme catalyses GTP + H2O = GDP + phosphate + H(+). Functionally, required for accurate and efficient protein synthesis under certain stress conditions. May act as a fidelity factor of the translation reaction, by catalyzing a one-codon backward translocation of tRNAs on improperly translocated ribosomes. Back-translocation proceeds from a post-translocation (POST) complex to a pre-translocation (PRE) complex, thus giving elongation factor G a second chance to translocate the tRNAs correctly. Binds to ribosomes in a GTP-dependent manner. The polypeptide is Elongation factor 4 (Streptococcus gordonii (strain Challis / ATCC 35105 / BCRC 15272 / CH1 / DL1 / V288)).